Here is a 194-residue protein sequence, read N- to C-terminus: Protein GrpE (194 aa).

A disordered region spans residues Met1–Asp40. Residues Ala20–Glu38 show a composition bias toward low complexity.

It belongs to the GrpE family. Homodimer.

It localises to the cytoplasm. Functionally, participates actively in the response to hyperosmotic and heat shock by preventing the aggregation of stress-denatured proteins, in association with DnaK and GrpE. It is the nucleotide exchange factor for DnaK and may function as a thermosensor. Unfolded proteins bind initially to DnaJ; upon interaction with the DnaJ-bound protein, DnaK hydrolyzes its bound ATP, resulting in the formation of a stable complex. GrpE releases ADP from DnaK; ATP binding to DnaK triggers the release of the substrate protein, thus completing the reaction cycle. Several rounds of ATP-dependent interactions between DnaJ, DnaK and GrpE are required for fully efficient folding. The chain is Protein GrpE from Chlorobaculum tepidum (strain ATCC 49652 / DSM 12025 / NBRC 103806 / TLS) (Chlorobium tepidum).